A 492-amino-acid chain; its full sequence is NADH-quinone oxidoreductase subunit N 2 (492 aa).

Transmembrane regions (helical) follow at residues 16-36 (ILPEIVLAVFGIVVMMADALI), 44-64 (PLGYLSLIGVLVSLGAIACQA), 87-107 (FSLFFHVLIALITAAVLLVSF), 118-138 (GEYYAIILFSALGMMLMTSAT), 140-160 (LVLIFIALEISSIGSYVLAAM), 175-195 (FLLGSFATAFFLYGVALIFGA), 216-236 (PIIYLAVALMFIGLGFKVAAA), 250-270 (PSPIVALMSTGPKAAAFAVLL), 282-302 (FWIVWVSAALSMTIGNIGALV), 309-329 (LLAYSSIAHAGYMLVAFAAAK), 333-353 (ISAAIFYTATYAAMNVGAFAV), 381-401 (AAILTVFLLSLIGIPVTGGFF), 416-438 (VWLTIIGVINSAVGAYYYLRIIV), and 455-475 (PFGLALALAMCLMFTIYLGVL).

The protein belongs to the complex I subunit 2 family. As to quaternary structure, NDH-1 is composed of 14 different subunits. Subunits NuoA, H, J, K, L, M, N constitute the membrane sector of the complex.

The protein resides in the cell inner membrane. It catalyses the reaction a quinone + NADH + 5 H(+)(in) = a quinol + NAD(+) + 4 H(+)(out). Functionally, NDH-1 shuttles electrons from NADH, via FMN and iron-sulfur (Fe-S) centers, to quinones in the respiratory chain. The immediate electron acceptor for the enzyme in this species is believed to be ubiquinone. Couples the redox reaction to proton translocation (for every two electrons transferred, four hydrogen ions are translocated across the cytoplasmic membrane), and thus conserves the redox energy in a proton gradient. This is NADH-quinone oxidoreductase subunit N 2 from Koribacter versatilis (strain Ellin345).